Consider the following 668-residue polypeptide: Metal reductase (668 aa).

Residues 23 to 25 (PMH), Gly-57, Gln-98, Arg-216, Arg-290, and 312 to 313 (AR) each bind FMN. Cys-336 and Cys-339 together coordinate [4Fe-4S] cluster. Residue Gln-341 participates in FAD binding. Positions 343 and 355 each coordinate [4Fe-4S] cluster. FAD contacts are provided by Ala-386, Glu-405, Gln-413, Arg-423, and Ala-450.

This sequence in the N-terminal section; belongs to the NADH:flavin oxidoreductase/NADH oxidase family. In terms of assembly, homotetramer. FMN is required as a cofactor. FAD serves as cofactor. Requires [4Fe-4S] cluster as cofactor.

The protein resides in the cytoplasm. In terms of biological role, metal reductase able to reduce Fe(III)-chelates to Fe(II)-chelates, as well as soluble Cr(VI) and U(VI), using NADH as electron donor. Cannot use NADPH as an electron donor. Is unable to reduce riboflavin and FMN with NADH as electron donor. May have an in vivo role in metal reduction in D.reducens, which is an organism capable of reducing contaminant heavy metals and radionuclides. The chain is Metal reductase from Desulforamulus reducens (strain ATCC BAA-1160 / DSM 100696 / MI-1) (Desulfotomaculum reducens).